A 949-amino-acid polypeptide reads, in one-letter code: MKYLASFRTTLKASRYMFRALALVLWLLIAFSSVFYIVNALHQRESEIRQEFNLSSDQAQRFIQRTSDVMKELKYIAENRLSAENGVLSPRGRETQADVPAFEPLFADSDCSAMSNTWRGSLESLAWFMRYWRDNFSAAYDLNRVFLIGSDNLCMANFGLRDMPVERDTALKALHERINKYRNAPQDDSGSNLYWISEGPRPGVGYFYALTPVYLANRLQALLGVEQTIRMENFFLPGTLPMGVTILDENGHTLISLTGPESKIKGDPRWMQERSWFGYTEGFRELVLKKNLPPSSLSIVYSVPVDKVLERIRMLILNAILLNVLAGAALFTLARMYERRIFIPAESDALRLEEHEQFNRKIVASAPVGICILRTADGVNILSNELAHTYLNMLTHEDRQRLTQIICGQQVNFVDVLTSNNTNLQISFVHSRYRNENVAICVLVDVSSRVKMEESLQEMAQAAEQASQSKSMFLATVSHELRTPLYGIIGNLDLLQTKELPKGVDRLVTAMNNSSSLLLKIISDILDFSKIESEQLKIEPREFSPREVMNHITANYLPLVVRKQLGLYCFIEPDVPVALNGDPMRLQQVISNLLSNAIKFTDTGCIVLHVRADGDYLSIRVRDTGVGIPAKEVVRLFDPFFQVGTGVQRNFQGTGLGLAICEKLISMMDGDISVDSEPGMGSQFTVRIPLYGAQYPQKKGVEGLSGKRCWLAVRNASLCQFLETSLQRSGIVVTTYEGQEPTPEDVLITDEVVSKKWQGRAVVTFCRRHIGIPLEKAPGEWVHSVAAPHELPALLARIYLIEMESDDPANALPSTDKAVSDNDDMMILVVDDHPINRRLLADQLGSLGYQCKTANDGVDALNVLSKNHIDIVLSDVNMPNMDGYRLTQRIRQLGLTLPVIGVTANALAEEKQRCLESGMDSCLSKPVTLDVIKQTLTLYAERVRKSRDS.

The Cytoplasmic portion of the chain corresponds to 1-19; it reads MKYLASFRTTLKASRYMFR. The helical transmembrane segment at 20–41 threads the bilayer; the sequence is ALALVLWLLIAFSSVFYIVNAL. Residues 42-313 lie on the Periplasmic side of the membrane; the sequence is HQRESEIRQE…PVDKVLERIR (272 aa). The helical transmembrane segment at 314 to 335 threads the bilayer; sequence MLILNAILLNVLAGAALFTLAR. The Cytoplasmic portion of the chain corresponds to 336–949; that stretch reads MYERRIFIPA…AERVRKSRDS (614 aa). Residues 357–425 form the PAS domain; sequence QFNRKIVASA…VLTSNNTNLQ (69 aa). A Histidine kinase domain is found at 476–692; that stretch reads TVSHELRTPL…QFTVRIPLYG (217 aa). His479 carries the phosphohistidine; by autocatalysis modification. Positions 705–805 constitute an ABL domain; sequence SGKRCWLAVR…ARIYLIEMES (101 aa). Residues 826 to 940 enclose the Response regulatory domain; the sequence is MILVVDDHPI…VIKQTLTLYA (115 aa). A 4-aspartylphosphate modification is found at Asp875.

Belongs to the RcsC family. As to quaternary structure, interacts with RcsD. Post-translationally, autophosphorylated. Activation probably requires a transfer of a phosphate group from a His in the transmitter domain to an Asp in the receiver domain.

The protein resides in the cell inner membrane. The enzyme catalyses ATP + protein L-histidine = ADP + protein N-phospho-L-histidine.. With respect to regulation, the Rcs phosphorelay may be activated by RcsF. DjlA, LolA and OmpG might act as a regulator of the phosphorelay. Activity is probably up-regulated by YmgA/AriR, and possibly down-regulated by YcgZ, all 3 are connector proteins providing additional signal input into signaling system. Component of the Rcs signaling system, which controls transcription of numerous genes. RcsC functions as a membrane-associated protein kinase that phosphorylates RcsD in response to environmental signals. The phosphoryl group is then transferred to the response regulator RcsB. RcsC also has phosphatase activity. The system controls expression of genes involved in colanic acid capsule synthesis, biofilm formation and cell division. The protein is Sensor histidine kinase RcsC of Escherichia coli (strain K12).